Here is a 308-residue protein sequence, read N- to C-terminus: Glycerol-3-phosphate dehydrogenase [NAD(P)+] (308 aa).

Trp13, Arg33, and Lys81 together coordinate NADPH. Sn-glycerol 3-phosphate is bound by residues Lys81 and Gly109. Ala113 lines the NADPH pocket. The sn-glycerol 3-phosphate site is built by Lys163, Asp216, Ser226, Arg227, and Asn228. Residue Lys163 is the Proton acceptor of the active site. Arg227 lines the NADPH pocket. Glu253 is an NADPH binding site.

The protein belongs to the NAD-dependent glycerol-3-phosphate dehydrogenase family.

The protein localises to the cytoplasm. It catalyses the reaction sn-glycerol 3-phosphate + NAD(+) = dihydroxyacetone phosphate + NADH + H(+). The enzyme catalyses sn-glycerol 3-phosphate + NADP(+) = dihydroxyacetone phosphate + NADPH + H(+). The protein operates within membrane lipid metabolism; glycerophospholipid metabolism. Catalyzes the reduction of the glycolytic intermediate dihydroxyacetone phosphate (DHAP) to sn-glycerol 3-phosphate (G3P), the key precursor for phospholipid synthesis. The protein is Glycerol-3-phosphate dehydrogenase [NAD(P)+] of Thermosynechococcus vestitus (strain NIES-2133 / IAM M-273 / BP-1).